A 180-amino-acid chain; its full sequence is ATP-dependent protease subunit HslV (180 aa).

The active site involves T5. 3 residues coordinate Na(+): G165, C168, and T171.

Belongs to the peptidase T1B family. HslV subfamily. A double ring-shaped homohexamer of HslV is capped on each side by a ring-shaped HslU homohexamer. The assembly of the HslU/HslV complex is dependent on binding of ATP.

The protein localises to the cytoplasm. It catalyses the reaction ATP-dependent cleavage of peptide bonds with broad specificity.. Allosterically activated by HslU binding. Functionally, protease subunit of a proteasome-like degradation complex believed to be a general protein degrading machinery. The protein is ATP-dependent protease subunit HslV of Helicobacter pylori (strain HPAG1).